The chain runs to 93 residues: MAQGEFKKKKNSSANKGGRVTKHSKNPKKGARYCAPRRAAAIKDHTINANITKTLNVRNEKLIAGIASQQVGKLTITKALGEAGAKELKEGKH.

Residues M1–R32 are disordered. Basic residues predominate over residues R19–A31.

The protein belongs to the UPF0390 family.

In Schizosaccharomyces pombe (strain 972 / ATCC 24843) (Fission yeast), this protein is UPF0390 protein C24B10.18.